Reading from the N-terminus, the 430-residue chain is Glucose-1-phosphate adenylyltransferase (430 aa).

Residues glycine 163, 178-179 (EK), and serine 210 each bind alpha-D-glucose 1-phosphate.

This sequence belongs to the bacterial/plant glucose-1-phosphate adenylyltransferase family. As to quaternary structure, homotetramer.

It carries out the reaction alpha-D-glucose 1-phosphate + ATP + H(+) = ADP-alpha-D-glucose + diphosphate. The protein operates within glycan biosynthesis; glycogen biosynthesis. Functionally, involved in the biosynthesis of ADP-glucose, a building block required for the elongation reactions to produce glycogen. Catalyzes the reaction between ATP and alpha-D-glucose 1-phosphate (G1P) to produce pyrophosphate and ADP-Glc. This is Glucose-1-phosphate adenylyltransferase from Synechococcus elongatus (strain ATCC 33912 / PCC 7942 / FACHB-805) (Anacystis nidulans R2).